Here is a 156-residue protein sequence, read N- to C-terminus: Small ribosomal subunit protein uS7 (156 aa).

This sequence belongs to the universal ribosomal protein uS7 family. Part of the 30S ribosomal subunit. Contacts proteins S9 and S11.

In terms of biological role, one of the primary rRNA binding proteins, it binds directly to 16S rRNA where it nucleates assembly of the head domain of the 30S subunit. Is located at the subunit interface close to the decoding center, probably blocks exit of the E-site tRNA. This Aliivibrio fischeri (strain MJ11) (Vibrio fischeri) protein is Small ribosomal subunit protein uS7.